A 322-amino-acid polypeptide reads, in one-letter code: Transcription factor IIIA (322 aa).

C2H2-type zinc fingers lie at residues 12–36 (FVCSFLNCKASFSKAWKLEAHYCKH), 42–64 (FACDRCDKTFCTRCQLTRHNLSH), 70–95 (YQCLEDGCSESFISTAGLKNHVERVH), 102–126 (YVCDYEGCAKEFRKKKQLRSHKCEH), 132–156 (FECQYEGCGKKYTTSKKLQKHEKVH), 159–184 (YPCAEEGCDFQGRMWTEYQAHRKAAH), 188–211 (LQCDSCAKVFHKAWFLKKHKLFVH), 218–243 (FKCTKEGCQKTYTTHFNLQNHILSFH), and 249–273 (FICPHDGCGKAFAMEGSLKRHAVVH). Positions 272 to 322 (VHDPQKKKLQKKTKRGRKKKLEPKTNVSDDSELPAQLHGLSLNTSTSQNNP) are disordered. The segment covering 278–292 (KKLQKKTKRGRKKKL) has biased composition (basic residues). Polar residues predominate over residues 312–322 (SLNTSTSQNNP).

The protein resides in the nucleus. In terms of biological role, involved in ribosomal large subunit biogenesis. Interacts with the internal control region (ICR) of approximately 50 bases within the 5S RNA genes, is required for correct transcription of these genes by RNA polymerase III. Also binds the transcribed 5S RNA's. This chain is Transcription factor IIIA (gtf3a), found in Ictalurus punctatus (Channel catfish).